A 378-amino-acid chain; its full sequence is tRNA N(3)-cytidine methyltransferase METTL2B (378 aa).

Residue alanine 2 is modified to N-acetylalanine. Serine 4 bears the Phosphoserine mark. Residues tryptophan 78 and tyrosine 82 each coordinate S-adenosyl-L-methionine. Position 154 is a phosphothreonine (threonine 154). Residues glycine 188, aspartate 213, aspartate 239, leucine 240, and isoleucine 260 each contribute to the S-adenosyl-L-methionine site.

Belongs to the methyltransferase superfamily. METL family. In terms of assembly, monomer. Interacts with DALRD3.

The protein localises to the cytoplasm. It carries out the reaction cytidine(32) in tRNA(Thr) + S-adenosyl-L-methionine = N(3)-methylcytidine(32) in tRNA(Thr) + S-adenosyl-L-homocysteine + H(+). The catalysed reaction is cytidine(32) in tRNA(Arg)(CCU) + S-adenosyl-L-methionine = N(3)-methylcytidine(32) in tRNA(Arg)(CCU) + S-adenosyl-L-homocysteine + H(+). In terms of biological role, S-adenosyl-L-methionine-dependent methyltransferase that mediates N(3)-methylcytidine modification of residue 32 of the tRNA anticodon loop of tRNA(Thr)(UGU) and tRNA(Arg)(CCU). This is tRNA N(3)-cytidine methyltransferase METTL2B from Homo sapiens (Human).